The sequence spans 287 residues: 4-hydroxybenzoate octaprenyltransferase (287 aa).

8 helical membrane-spanning segments follow: residues 21 to 39, 95 to 115, 116 to 136, 138 to 158, 161 to 181, 213 to 233, 234 to 251, and 264 to 284; these read PIGT…WLAA, VLAL…TMNP, LTIG…FMKR, IPIP…MAYA, ANAL…WTIA, IIGA…QLSE, LGSS…LFVY, and CFQA…GVVI.

It belongs to the UbiA prenyltransferase family. It depends on Mg(2+) as a cofactor.

It localises to the cell inner membrane. It catalyses the reaction all-trans-octaprenyl diphosphate + 4-hydroxybenzoate = 4-hydroxy-3-(all-trans-octaprenyl)benzoate + diphosphate. It functions in the pathway cofactor biosynthesis; ubiquinone biosynthesis. Catalyzes the prenylation of para-hydroxybenzoate (PHB) with an all-trans polyprenyl group. Mediates the second step in the final reaction sequence of ubiquinone-8 (UQ-8) biosynthesis, which is the condensation of the polyisoprenoid side chain with PHB, generating the first membrane-bound Q intermediate 3-octaprenyl-4-hydroxybenzoate. The protein is 4-hydroxybenzoate octaprenyltransferase of Aeromonas hydrophila subsp. hydrophila (strain ATCC 7966 / DSM 30187 / BCRC 13018 / CCUG 14551 / JCM 1027 / KCTC 2358 / NCIMB 9240 / NCTC 8049).